A 680-amino-acid chain; its full sequence is DNA-directed RNA polymerase subunit beta' (680 aa).

Zn(2+) contacts are provided by Cys-69, Cys-71, Cys-87, and Cys-90. Mg(2+) contacts are provided by Asp-489, Asp-491, and Asp-493.

Belongs to the RNA polymerase beta' chain family. RpoC1 subfamily. In plastids the minimal PEP RNA polymerase catalytic core is composed of four subunits: alpha, beta, beta', and beta''. When a (nuclear-encoded) sigma factor is associated with the core the holoenzyme is formed, which can initiate transcription. It depends on Mg(2+) as a cofactor. Zn(2+) is required as a cofactor.

The protein resides in the plastid. The protein localises to the chloroplast. The enzyme catalyses RNA(n) + a ribonucleoside 5'-triphosphate = RNA(n+1) + diphosphate. Its function is as follows. DNA-dependent RNA polymerase catalyzes the transcription of DNA into RNA using the four ribonucleoside triphosphates as substrates. The chain is DNA-directed RNA polymerase subunit beta' from Arabidopsis thaliana (Mouse-ear cress).